We begin with the raw amino-acid sequence, 165 residues long: Acireductone dioxygenase (165 aa).

Fe(2+) contacts are provided by His-90, His-92, Glu-96, and His-134. His-90, His-92, Glu-96, and His-134 together coordinate Ni(2+).

Belongs to the acireductone dioxygenase (ARD) family. In terms of assembly, monomer. It depends on Fe(2+) as a cofactor. Ni(2+) is required as a cofactor.

The catalysed reaction is 1,2-dihydroxy-5-(methylsulfanyl)pent-1-en-3-one + O2 = 3-(methylsulfanyl)propanoate + CO + formate + 2 H(+). It carries out the reaction 1,2-dihydroxy-5-(methylsulfanyl)pent-1-en-3-one + O2 = 4-methylsulfanyl-2-oxobutanoate + formate + 2 H(+). Its pathway is amino-acid biosynthesis; L-methionine biosynthesis via salvage pathway; L-methionine from S-methyl-5-thio-alpha-D-ribose 1-phosphate: step 5/6. Catalyzes 2 different reactions between oxygen and the acireductone 1,2-dihydroxy-3-keto-5-methylthiopentene (DHK-MTPene) depending upon the metal bound in the active site. Fe-containing acireductone dioxygenase (Fe-ARD) produces formate and 2-keto-4-methylthiobutyrate (KMTB), the alpha-ketoacid precursor of methionine in the methionine recycle pathway. Ni-containing acireductone dioxygenase (Ni-ARD) produces methylthiopropionate, carbon monoxide and formate, and does not lie on the methionine recycle pathway. This Rhodopseudomonas palustris (strain ATCC BAA-98 / CGA009) protein is Acireductone dioxygenase.